A 237-amino-acid polypeptide reads, in one-letter code: uncharacterized protein (237 aa).

50–57 (APPGTGKS) contacts ATP.

This is an uncharacterized protein from Escherichia coli (strain K12).